Consider the following 277-residue polypeptide: Large ribosomal subunit protein uL2 (277 aa).

A disordered region spans residues 215–277; that stretch reads GIRPTVRGSV…KLIVKRRNDK (63 aa). Residues 264–277 are compositionally biased toward basic and acidic residues; that stretch reads KYSDKLIVKRRNDK.

This sequence belongs to the universal ribosomal protein uL2 family. In terms of assembly, part of the 50S ribosomal subunit. Forms a bridge to the 30S subunit in the 70S ribosome.

In terms of biological role, one of the primary rRNA binding proteins. Required for association of the 30S and 50S subunits to form the 70S ribosome, for tRNA binding and peptide bond formation. It has been suggested to have peptidyltransferase activity; this is somewhat controversial. Makes several contacts with the 16S rRNA in the 70S ribosome. The protein is Large ribosomal subunit protein uL2 of Clostridium acetobutylicum (strain ATCC 824 / DSM 792 / JCM 1419 / IAM 19013 / LMG 5710 / NBRC 13948 / NRRL B-527 / VKM B-1787 / 2291 / W).